Consider the following 466-residue polypeptide: Lipase 2 (466 aa).

An N-terminal signal peptide occupies residues 1–16 (MKGLVFLLGLLPTIYA). Cys112 and Cys285 are joined by a disulfide. The active-site Charge relay system is Ser196. 3 N-linked (GlcNAc...) asparagine glycosylation sites follow: Asn231, Asn319, and Asn331. Catalysis depends on charge relay system residues Asp348 and His381. A disulfide bridge connects residues Cys364 and Cys409. N-linked (GlcNAc...) asparagine glycans are attached at residues Asn422 and Asn451.

The protein belongs to the AB hydrolase superfamily. Lipase family. Class Lip subfamily.

It is found in the secreted. The catalysed reaction is a triacylglycerol + H2O = a diacylglycerol + a fatty acid + H(+). Its function is as follows. Secreted lipase that is able to hydrolyze both the neutral triacylglycerols and the monopalmitate ester Tween 40, allowing the use of hydrolyzed products as carbon sources. Has broad lipolytic activity, which may be important for colonization and subsequent infection, therefore contributing to the persistence and virulence in human tissue. My be important for alimentary tract colonization, but not oral infection. Facilitates invasive disease via lipid-based suppression of the IL-17 response. Inhibits IL-17 production indirectly by suppressing IL-23 production by tissue-resident dendritic cells. The protein is Lipase 2 of Candida albicans (strain SC5314 / ATCC MYA-2876) (Yeast).